The sequence spans 372 residues: Glutamate 5-kinase (372 aa).

Residue lysine 14 participates in ATP binding. Substrate is bound by residues serine 54, aspartate 141, and asparagine 153. ATP-binding positions include 173–174 (TD) and 215–221 (TGGMATK). Residues 280–358 (KGKLVLDVGA…DEIESLLGYD (79 aa)) form the PUA domain.

The protein belongs to the glutamate 5-kinase family.

Its subcellular location is the cytoplasm. It carries out the reaction L-glutamate + ATP = L-glutamyl 5-phosphate + ADP. Its pathway is amino-acid biosynthesis; L-proline biosynthesis; L-glutamate 5-semialdehyde from L-glutamate: step 1/2. Catalyzes the transfer of a phosphate group to glutamate to form L-glutamate 5-phosphate. This chain is Glutamate 5-kinase, found in Shewanella woodyi (strain ATCC 51908 / MS32).